A 521-amino-acid chain; its full sequence is ATP synthase subunit beta (521 aa).

Low complexity-rich tracts occupy residues 1 to 21 and 28 to 42; these read MAKA…AAKA and PKTT…TKSG. The interval 1–42 is disordered; the sequence is MAKAATPKTTAAAEAKPAAKAPAKKAAPKTTAAAKPAATKSG. 199–206 is an ATP binding site; that stretch reads GGAGVGKT.

It belongs to the ATPase alpha/beta chains family. As to quaternary structure, F-type ATPases have 2 components, CF(1) - the catalytic core - and CF(0) - the membrane proton channel. CF(1) has five subunits: alpha(3), beta(3), gamma(1), delta(1), epsilon(1). CF(0) has three main subunits: a(1), b(2) and c(9-12). The alpha and beta chains form an alternating ring which encloses part of the gamma chain. CF(1) is attached to CF(0) by a central stalk formed by the gamma and epsilon chains, while a peripheral stalk is formed by the delta and b chains.

It localises to the cell inner membrane. The catalysed reaction is ATP + H2O + 4 H(+)(in) = ADP + phosphate + 5 H(+)(out). Functionally, produces ATP from ADP in the presence of a proton gradient across the membrane. The catalytic sites are hosted primarily by the beta subunits. The protein is ATP synthase subunit beta of Brucella canis (strain ATCC 23365 / NCTC 10854 / RM-666).